Here is a 500-residue protein sequence, read N- to C-terminus: NAD(P)H-quinone oxidoreductase chain 4, chloroplastic (500 aa).

A run of 14 helical transmembrane segments spans residues phenylalanine 4 to phenylalanine 24, isoleucine 37 to leucine 57, glycine 84 to alanine 104, serine 111 to phenylalanine 129, leucine 134 to methionine 154, phenylalanine 167 to leucine 187, alanine 208 to isoleucine 228, histidine 242 to valine 262, alanine 272 to alanine 292, isoleucine 305 to aspartate 325, glycine 330 to glycine 350, isoleucine 374 to alanine 396, isoleucine 416 to methionine 436, and leucine 462 to valine 482.

It belongs to the complex I subunit 4 family.

Its subcellular location is the plastid. It is found in the chloroplast thylakoid membrane. It catalyses the reaction a plastoquinone + NADH + (n+1) H(+)(in) = a plastoquinol + NAD(+) + n H(+)(out). The enzyme catalyses a plastoquinone + NADPH + (n+1) H(+)(in) = a plastoquinol + NADP(+) + n H(+)(out). The polypeptide is NAD(P)H-quinone oxidoreductase chain 4, chloroplastic (Liriodendron tulipifera (Tuliptree)).